We begin with the raw amino-acid sequence, 372 residues long: Type II methyltransferase M1.HphI (372 aa).

The region spanning 45 to 372 (LTYIDLFSGA…EAVLKMNTNE (328 aa)) is the SAM-dependent MTase C5-type domain. Residue Cys-122 is part of the active site.

This sequence belongs to the class I-like SAM-binding methyltransferase superfamily. C5-methyltransferase family.

It catalyses the reaction a 2'-deoxycytidine in DNA + S-adenosyl-L-methionine = a 5-methyl-2'-deoxycytidine in DNA + S-adenosyl-L-homocysteine + H(+). A methylase that recognizes the double-stranded sequence 5'-GGTGA-3' and protects the DNA from cleavage by the HphI endonuclease. Probably methylates C-2 on the bottom strand. In Haemophilus parahaemolyticus, this protein is Type II methyltransferase M1.HphI (hphIAM).